Here is a 303-residue protein sequence, read N- to C-terminus: Glycine--tRNA ligase alpha subunit (303 aa).

Belongs to the class-II aminoacyl-tRNA synthetase family. In terms of assembly, tetramer of two alpha and two beta subunits.

The protein resides in the cytoplasm. It carries out the reaction tRNA(Gly) + glycine + ATP = glycyl-tRNA(Gly) + AMP + diphosphate. The sequence is that of Glycine--tRNA ligase alpha subunit from Enterobacter sp. (strain 638).